The chain runs to 101 residues: Small ribosomal subunit protein bS18c (101 aa).

The interval 82–101 (KQFERAESTPRTPGPRTRNK) is disordered.

It belongs to the bacterial ribosomal protein bS18 family. In terms of assembly, part of the 30S ribosomal subunit.

It localises to the plastid. It is found in the chloroplast. This chain is Small ribosomal subunit protein bS18c, found in Platanus occidentalis (Sycamore).